The following is a 137-amino-acid chain: Ribosome-binding factor A (137 aa).

This sequence belongs to the RbfA family. Monomer. Binds 30S ribosomal subunits, but not 50S ribosomal subunits or 70S ribosomes.

It localises to the cytoplasm. Functionally, one of several proteins that assist in the late maturation steps of the functional core of the 30S ribosomal subunit. Associates with free 30S ribosomal subunits (but not with 30S subunits that are part of 70S ribosomes or polysomes). Required for efficient processing of 16S rRNA. May interact with the 5'-terminal helix region of 16S rRNA. In Nitrobacter winogradskyi (strain ATCC 25391 / DSM 10237 / CIP 104748 / NCIMB 11846 / Nb-255), this protein is Ribosome-binding factor A.